A 190-amino-acid polypeptide reads, in one-letter code: dCTP deaminase (190 aa).

Position 113-118 (113-118 (KSTYAR)) interacts with dCTP. Glu-139 functions as the Proton donor/acceptor in the catalytic mechanism. DCTP contacts are provided by Gln-158, Tyr-172, Lys-181, and Gln-182.

This sequence belongs to the dCTP deaminase family. In terms of assembly, homotrimer.

The catalysed reaction is dCTP + H2O + H(+) = dUTP + NH4(+). Its pathway is pyrimidine metabolism; dUMP biosynthesis; dUMP from dCTP (dUTP route): step 1/2. Its function is as follows. Catalyzes the deamination of dCTP to dUTP. This Chlamydia trachomatis serovar A (strain ATCC VR-571B / DSM 19440 / HAR-13) protein is dCTP deaminase.